Consider the following 484-residue polypeptide: Putative beta-barrel assembly-enhancing protease (484 aa).

An N-terminal signal peptide occupies residues 1–23 (MKFFPTRTLLCLCIAAPCLPAIA). H133 is a Zn(2+) binding site. E134 is an active-site residue. H137 and E198 together coordinate Zn(2+). D202 (proton donor) is an active-site residue. TPR repeat units follow at residues 307–340 (PSIQYGKALVYLDLKQFDKAEPLLTQLVKEQPDN), 341–374 (HFYLDAISDLYIELKQADKAQSLLEKALKQTPNN), 376–408 (VLTINYANVLLKQDKFTDAIRILQRYTHDNPND), and 426–459 (AEDLAARGEIMALQANWNKAIQFYTQASQLVELG).

This sequence belongs to the peptidase M48 family. BepA subfamily. Zn(2+) serves as cofactor.

It localises to the periplasm. Its function is as follows. Functions both as a chaperone and a metalloprotease. Maintains the integrity of the outer membrane by promoting either the assembly or the elimination of outer membrane proteins, depending on their folding state. The chain is Putative beta-barrel assembly-enhancing protease from Vibrio cholerae serotype O1 (strain ATCC 39315 / El Tor Inaba N16961).